Here is a 240-residue protein sequence, read N- to C-terminus: Large ribosomal subunit protein uL1c (240 aa).

The protein belongs to the universal ribosomal protein uL1 family. In terms of assembly, part of the 50S ribosomal subunit.

Its subcellular location is the plastid. The protein localises to the chloroplast. In terms of biological role, binds directly to 23S rRNA. Might be involved in E site tRNA release (Potential). This Cyanidium caldarium (Red alga) protein is Large ribosomal subunit protein uL1c (rpl1).